A 551-amino-acid polypeptide reads, in one-letter code: Scaffold protein D13 ortholog (551 aa).

It belongs to the poxviridae protein D13 family. Homotrimer. Self-assembles to form a layer. Interacts with A17 (via N-terminus); this interaction is necessary for D13 association with membranes.

The protein localises to the membrane. Scaffold protein which forms a transitory spherical honeycomb lattice providing curvature and rigidity to the convex membrane of crescent and immature virions (IV). This association occurs concomitantly with viral membrane formation. Targeted by the drug rifampicin, which prevents the formation of this lattice, and hence virus morphogenesis. In the presence of rifampicin, irregularly shaped membranes that lack the honeycomb layer accumulate around areas of electron-dense viroplasm. This layer is lost from virions during maturation from IV to mature virion (MV), through the proteolysis of A17 N-terminus. The sequence is that of Scaffold protein D13 ortholog from Sus scrofa (Pig).